A 680-amino-acid polypeptide reads, in one-letter code: WD repeat-containing protein 48 homolog (680 aa).

WD repeat units follow at residues 26 to 65 (QHRN…SEKY), 71 to 110 (HHND…CMST), 113 to 152 (THRD…ALTA), 164 to 203 (GSKD…RSMK), 206 to 245 (GHTE…CVQT), 248 to 287 (VHKE…NKTL), 290 to 329 (EEQA…RCTM), and 350 to 389 (KGGA…KKEQ). The tract at residues 592-616 (ETTPSGGNANNSLQNSQSDANSEGS) is disordered.

Belongs to the WD repeat WDR48 family. Catalytic component of the Usp12-46 deubiquitylase complex consisting of Usp12-46, Wdr20 and Uaf1; regulatory subunit that, together wtih Wdr20, stabilizes Usp12-46. The Usp12-46 deubiquitylase complex associates with arr/arrow; the interaction leads to deubiquitination and stabilization of arr/arrow.

Its function is as follows. Regulatory component of the Usp12-46 deubiquitylase complex. activates deubiquitination by increasing the catalytic turnover without increasing the affinity of deubiquitinating enzymes for the substrate. The complex deubiquitylates the wg/wingless-signaling receptor arr/arrow, which stabilizes the receptor and increases its concentration at the cell surface; this enhances the sensitivity of cells to wg/wingless-signal stimulation. This increases the amplitude and spatial range of the signaling response to the wg/wingless morphogen gradient, facilitating the precise concentration-dependent regulation of its target genes. Together with Wdr20 and Usp12-46 required for wg/wingless-mediated signaling in the wing imaginal disc and for wg/wingless-dependent regulation of intestinal stem cell proliferation. This Drosophila yakuba (Fruit fly) protein is WD repeat-containing protein 48 homolog.